A 221-amino-acid polypeptide reads, in one-letter code: Adenylate kinase (221 aa).

Residue 10-15 (GAGKGT) participates in ATP binding. The tract at residues 30–59 (STGDIFRQNLRDNTELGKLAKEYMDKGLLV) is NMP. Residues T31, R36, 57–59 (LLV), 85–88 (GYPR), and Q92 contribute to the AMP site. The interval 126–163 (GRRVCPVCGATYHIKTSPPKVDNVCDKCGSELIQRSDD) is LID. R127 provides a ligand contact to ATP. C130 and C133 together coordinate Zn(2+). 136-137 (TY) provides a ligand contact to ATP. Residues C150 and C153 each coordinate Zn(2+). Residues R160 and R171 each coordinate AMP. ATP is bound at residue K199.

This sequence belongs to the adenylate kinase family. Monomer.

The protein localises to the cytoplasm. It carries out the reaction AMP + ATP = 2 ADP. It participates in purine metabolism; AMP biosynthesis via salvage pathway; AMP from ADP: step 1/1. Functionally, catalyzes the reversible transfer of the terminal phosphate group between ATP and AMP. Plays an important role in cellular energy homeostasis and in adenine nucleotide metabolism. This Caldanaerobacter subterraneus subsp. tengcongensis (strain DSM 15242 / JCM 11007 / NBRC 100824 / MB4) (Thermoanaerobacter tengcongensis) protein is Adenylate kinase.